We begin with the raw amino-acid sequence, 476 residues long: MNFETVIGLEVHVELKTNSKIFSSAPAHFGAEPNTNTTVVDLGMPGVLPVLNKRAVEFGMKAAMAINCEIAEHTKFDRKNYFYPDNPKAYQISQFDKPIGEHGWIEIEVGGKKKKIGITRLHLEEDAGKNTHTSHGYSLVDINRQGTPLIEIVSEPDIRSAEEAYAYLEKLKSIIQYTGVSDVKMEEGSMRCDANISIRPIGQEEFGVKTELKNLNSFNNVRKGIEYEEKRQAEVLKSGGIIEQETRRFEEATGKTSLMRIKEGSDDYRYFPEPDLVDLFIDDAWKERIRAEIPELPDKRQIRYINDLGLPAYDAMVLTLTKEMSDFFEATLVAGADAKQASNWLMGEVSAYLNAEQKELHETGLTPENLAGMIKLIEAGTISSKIAKKVFRELAQNGGDAEQVVKDKGLVQISDEGALRTIISEILDNNEQSIVDFKNGKDRAVGFLVGQVMKATKGQANPPMVNKLLLEEMNKR.

Belongs to the GatB/GatE family. GatB subfamily. As to quaternary structure, heterotrimer of A, B and C subunits.

The enzyme catalyses L-glutamyl-tRNA(Gln) + L-glutamine + ATP + H2O = L-glutaminyl-tRNA(Gln) + L-glutamate + ADP + phosphate + H(+). The catalysed reaction is L-aspartyl-tRNA(Asn) + L-glutamine + ATP + H2O = L-asparaginyl-tRNA(Asn) + L-glutamate + ADP + phosphate + 2 H(+). Functionally, allows the formation of correctly charged Asn-tRNA(Asn) or Gln-tRNA(Gln) through the transamidation of misacylated Asp-tRNA(Asn) or Glu-tRNA(Gln) in organisms which lack either or both of asparaginyl-tRNA or glutaminyl-tRNA synthetases. The reaction takes place in the presence of glutamine and ATP through an activated phospho-Asp-tRNA(Asn) or phospho-Glu-tRNA(Gln). The sequence is that of Aspartyl/glutamyl-tRNA(Asn/Gln) amidotransferase subunit B from Listeria monocytogenes serovar 1/2a (strain ATCC BAA-679 / EGD-e).